The sequence spans 458 residues: UDP-N-acetylmuramate--L-alanine ligase (458 aa).

Residue 118-124 participates in ATP binding; sequence GTHGKTT.

This sequence belongs to the MurCDEF family.

It localises to the cytoplasm. The enzyme catalyses UDP-N-acetyl-alpha-D-muramate + L-alanine + ATP = UDP-N-acetyl-alpha-D-muramoyl-L-alanine + ADP + phosphate + H(+). It participates in cell wall biogenesis; peptidoglycan biosynthesis. Functionally, cell wall formation. This is UDP-N-acetylmuramate--L-alanine ligase from Clostridium botulinum (strain Langeland / NCTC 10281 / Type F).